Here is a 1388-residue protein sequence, read N- to C-terminus: DNA-directed RNA polymerase subunit beta (1388 aa).

Belongs to the RNA polymerase beta chain family. The RNAP catalytic core consists of 2 alpha, 1 beta, 1 beta' and 1 omega subunit. When a sigma factor is associated with the core the holoenzyme is formed, which can initiate transcription.

The enzyme catalyses RNA(n) + a ribonucleoside 5'-triphosphate = RNA(n+1) + diphosphate. In terms of biological role, DNA-dependent RNA polymerase catalyzes the transcription of DNA into RNA using the four ribonucleoside triphosphates as substrates. This is DNA-directed RNA polymerase subunit beta from Stenotrophomonas maltophilia (strain K279a).